A 217-amino-acid polypeptide reads, in one-letter code: ATP phosphoribosyltransferase (217 aa).

It belongs to the ATP phosphoribosyltransferase family. Short subfamily. In terms of assembly, heteromultimer composed of HisG and HisZ subunits.

It localises to the cytoplasm. The catalysed reaction is 1-(5-phospho-beta-D-ribosyl)-ATP + diphosphate = 5-phospho-alpha-D-ribose 1-diphosphate + ATP. It participates in amino-acid biosynthesis; L-histidine biosynthesis; L-histidine from 5-phospho-alpha-D-ribose 1-diphosphate: step 1/9. Its function is as follows. Catalyzes the condensation of ATP and 5-phosphoribose 1-diphosphate to form N'-(5'-phosphoribosyl)-ATP (PR-ATP). Has a crucial role in the pathway because the rate of histidine biosynthesis seems to be controlled primarily by regulation of HisG enzymatic activity. The sequence is that of ATP phosphoribosyltransferase from Synechococcus sp. (strain WH7803).